A 1392-amino-acid polypeptide reads, in one-letter code: DNA-directed RNA polymerase subunit beta'' (1392 aa).

The Zn(2+) site is built by cysteine 224, cysteine 295, cysteine 302, and cysteine 305.

It belongs to the RNA polymerase beta' chain family. RpoC2 subfamily. In terms of assembly, in plastids the minimal PEP RNA polymerase catalytic core is composed of four subunits: alpha, beta, beta', and beta''. When a (nuclear-encoded) sigma factor is associated with the core the holoenzyme is formed, which can initiate transcription. The cofactor is Zn(2+).

The protein localises to the plastid. It localises to the chloroplast. The catalysed reaction is RNA(n) + a ribonucleoside 5'-triphosphate = RNA(n+1) + diphosphate. Functionally, DNA-dependent RNA polymerase catalyzes the transcription of DNA into RNA using the four ribonucleoside triphosphates as substrates. The protein is DNA-directed RNA polymerase subunit beta'' of Solanum bulbocastanum (Wild potato).